A 225-amino-acid polypeptide reads, in one-letter code: Adenosylcobinamide-GDP ribazoletransferase (225 aa).

5 helical membrane passes run Phe-34 to Leu-54, Asn-93 to Phe-113, Val-116 to Leu-136, Pro-165 to Ile-185, and Val-204 to Ala-224.

It belongs to the CobS family. The cofactor is Mg(2+).

Its subcellular location is the cell membrane. It carries out the reaction alpha-ribazole + adenosylcob(III)inamide-GDP = adenosylcob(III)alamin + GMP + H(+). It catalyses the reaction alpha-ribazole 5'-phosphate + adenosylcob(III)inamide-GDP = adenosylcob(III)alamin 5'-phosphate + GMP + H(+). It participates in cofactor biosynthesis; adenosylcobalamin biosynthesis; adenosylcobalamin from cob(II)yrinate a,c-diamide: step 7/7. Joins adenosylcobinamide-GDP and alpha-ribazole to generate adenosylcobalamin (Ado-cobalamin). Also synthesizes adenosylcobalamin 5'-phosphate from adenosylcobinamide-GDP and alpha-ribazole 5'-phosphate. The sequence is that of Adenosylcobinamide-GDP ribazoletransferase (cobS1) from Archaeoglobus fulgidus (strain ATCC 49558 / DSM 4304 / JCM 9628 / NBRC 100126 / VC-16).